An 88-amino-acid chain; its full sequence is Acyl-CoA-binding domain-containing protein 7 (88 aa).

The region spanning 3-88 is the ACB domain; it reads LQADFDKAAK…AKELIEKYGI (86 aa). An acyl-CoA is bound by residues arginine 15, 30–34, lysine 56, and tyrosine 75; that span reads YGLYK.

It belongs to the ACBD7 family.

Functionally, binds medium- and long-chain acyl-CoA esters. This is Acyl-CoA-binding domain-containing protein 7 (ACBD7) from Bos taurus (Bovine).